Here is a 188-residue protein sequence, read N- to C-terminus: MLCENCQLNEAELKVKVTSKNKTEEKMVCQTCAEGHHPWNQANEQPEYQEHQDNFEEAFVVKQILQHLATKHGINFQEVAFKEEKRCPSCHMTLKDIAHVGKFGCANCYATFKDDIIDIVRRVQGGQFEHVGKTPHSSHKKIALKRKIEEKNEYLKKLIEIQDFEEAAIVRDEIKALKAESEVQHDDA.

4 short sequence motifs (CXXC metal binding motif) span residues 3-6 (CENC), 29-32 (CQTC), 87-90 (CPSC), and 105-108 (CANC). The 36-residue stretch at 145–180 (KRKIEEKNEYLKKLIEIQDFEEAAIVRDEIKALKAE) folds into the UVR domain.

Interacts with McsB and CtsR; the CXXC motifs are needed for the binding.

In terms of biological role, activates the phosphorylation activity of the protein-arginine kinase McsB. May function as an important molecule for oxidative tolerance in various types of stress including that of heavy metals. Binds to Cu(2+), Zn(2+), Co(2+) and Cd(2+) via its CXXC metal binding motifs. In Staphylococcus aureus (strain NCTC 8325 / PS 47), this protein is Protein-arginine kinase activator protein.